The chain runs to 61 residues: UPF0434 protein PST_2635 (61 aa).

Belongs to the UPF0434 family.

The chain is UPF0434 protein PST_2635 from Stutzerimonas stutzeri (strain A1501) (Pseudomonas stutzeri).